The sequence spans 598 residues: Pentatricopeptide repeat-containing protein At1g09900 (598 aa).

PPR repeat units lie at residues 101–135, 136–170, 171–201, 203–237, 238–272, 273–307, 308–342, 343–377, 378–412, 413–447, 448–482, 483–517, 518–552, and 553–587; these read EDVESNNHLRQMVRTGELEEGFKFLENMVYHGNVP, DIIPCTTLIRGFCRLGKTRKAAKILEILEGSGAVP, DVITYNVMISGYCKAGEINNALSVLDRMSVS, DVVTYNTILRSLCDSGKLKQAMEVLDRMLQRDCYP, DVITYTILIEATCRDSGVGHAMKLLDEMRDRGCTP, DVVTYNVLVNGICKEGRLDEAIKFLNDMPSSGCQP, NVITHNIILRSMCSTGRWMDAEKLLADMLRKGFSP, SVVTFNILINFLCRKGLLGRAIDILEKMPQHGCQP, NSLSYNPLLHGFCKEKKMDRAIEYLERMVSRGCYP, DIVTYNTMLTALCKDGKVEDAVEILNQLSSKGCSP, VLITYNTVIDGLAKAGKTGKAIKLLDEMRAKDLKP, DTITYSSLVGGLSREGKVDEAIKFFHEFERMGIRP, NAVTFNSIMLGLCKSRQTDRAIDFLVFMINRGCKP, and NETSYTILIEGLAYEGMAKEALELLNELCNKGLMK.

The protein belongs to the PPR family. P subfamily.

This Arabidopsis thaliana (Mouse-ear cress) protein is Pentatricopeptide repeat-containing protein At1g09900.